The primary structure comprises 428 residues: MFKFYPSDFFHFEFLRVLASAPAGGAETGECLAVLPQVPDGDAEAWYRAWTAQAQQARGLGDEALVSGDTVAASGAYLRASNYFRASEFFLHTRPDDPRLLAAMENSVAVFDKGVDLLDTCTVVRVEIPYEEEKGAARLPGRLYLPRSGAAQTGQGQSEDKLPLLIMTGGFDSTQEELYFFGPAAALPRGYAVLTFEGPGQGICLRRDGLRLRPDWEHVTTKVLDVVESQLAKDYPIDLERVAVVGASLGGYFALRAAADPRVRACVSCDACYDLFDVTRSRMPGWFINGWLSRRLSDGFFNWVVNKLAGWSFQLRWEFGHSMWVYGVESPAEVMRCMQQYHARGYLQKVKCSTFVTGAADTFYFTPKQNTEPIFEALGHVPLQKKRLWIGKGVEGGGLQAKIGAWAVFHQKMFVWLDEQFEIKRGTI.

The active site involves Ser-248.

It belongs to the AB hydrolase superfamily. FUS2 hydrolase family.

It participates in secondary metabolite biosynthesis. Hydrolase; part of the cluster that mediates the biosynthesis of acurin A, a highly reduced polyketide coupled to a serine via a peptide bond. The activities of the highly reducing polyketide synthase acrA and the nonribosomal peptide synthetase acrB are collectively responsible for the synthesis of the acurin A core structure with a heptaketide backbone produced by acrA covalently fused to a L-serine by acrB. After the formation of the PK-NRP hybrid product, it is detached from acrB by reductive release to set up the formation of the lactam ring by aldol condensation. The hydrolyase acrC then catalyzes water loss to generate a double bond in the ring. This double bond is probably reduced, which is followed by three oxidations at C-22 to generate the carboxylic acid moiety, involving probably the FAD-binding monooxygenase acrE and the cytochrome P450 monooxygenases acrD and acrF. Finally, a last methylation step performed by the O-methyltransferase acrG leads to the production of acurin A. The sequence is that of Hydrolase acrC from Aspergillus aculeatus (strain ATCC 16872 / CBS 172.66 / WB 5094).